An 807-amino-acid chain; its full sequence is Glycerol-3-phosphate acyltransferase (807 aa).

The HXXXXD motif signature appears at 306–311 (HRSHMD).

Belongs to the GPAT/DAPAT family.

Its subcellular location is the cell inner membrane. It carries out the reaction sn-glycerol 3-phosphate + an acyl-CoA = a 1-acyl-sn-glycero-3-phosphate + CoA. It functions in the pathway phospholipid metabolism; CDP-diacylglycerol biosynthesis; CDP-diacylglycerol from sn-glycerol 3-phosphate: step 1/3. The protein is Glycerol-3-phosphate acyltransferase (plsB) of Escherichia coli O157:H7.